The following is a 700-amino-acid chain: Elongation factor G (700 aa).

Positions 8 to 290 (ERYRNIGISA…GVIDFMPSPI (283 aa)) constitute a tr-type G domain. GTP-binding positions include 17 to 24 (AHIDAGKT), 88 to 92 (DTPGH), and 142 to 145 (NKMD).

It belongs to the TRAFAC class translation factor GTPase superfamily. Classic translation factor GTPase family. EF-G/EF-2 subfamily.

The protein localises to the cytoplasm. Functionally, catalyzes the GTP-dependent ribosomal translocation step during translation elongation. During this step, the ribosome changes from the pre-translocational (PRE) to the post-translocational (POST) state as the newly formed A-site-bound peptidyl-tRNA and P-site-bound deacylated tRNA move to the P and E sites, respectively. Catalyzes the coordinated movement of the two tRNA molecules, the mRNA and conformational changes in the ribosome. The polypeptide is Elongation factor G (Methylibium petroleiphilum (strain ATCC BAA-1232 / LMG 22953 / PM1)).